We begin with the raw amino-acid sequence, 416 residues long: Leu/Ile/Val-binding protein homolog 4 (416 aa).

An N-terminal signal peptide occupies residues 1–26; it reads MSLKVFLQAGVACAALSLAGAAGASA.

This sequence belongs to the leucine-binding protein family.

Its function is as follows. Component of an amino-acid transport system. The protein is Leu/Ile/Val-binding protein homolog 4 of Brucella melitensis biotype 1 (strain ATCC 23456 / CCUG 17765 / NCTC 10094 / 16M).